Here is a 692-residue protein sequence, read N- to C-terminus: Protein arginine N-methyltransferase 7 (692 aa).

SAM-dependent MTase PRMT-type domains are found at residues E14 to W359 and A368 to R692.

This sequence belongs to the class I-like SAM-binding methyltransferase superfamily. Protein arginine N-methyltransferase family. PRMT7 subfamily.

Functionally, essential arginine methyltransferase that can both catalyze the formation of omega-N monomethylarginine (MMA) and symmetrical dimethylarginine (sDMA). Specifically mediates the symmetrical dimethylation of arginine residues in the small nuclear ribonucleoproteins SmD1 and SmD3. This chain is Protein arginine N-methyltransferase 7 (Art7), found in Drosophila persimilis (Fruit fly).